The sequence spans 508 residues: Light-independent protochlorophyllide reductase subunit B (508 aa).

Residue D36 participates in [4Fe-4S] cluster binding. The active-site Proton donor is D294. 429 to 430 (GM) serves as a coordination point for substrate.

The protein belongs to the ChlB/BchB/BchZ family. As to quaternary structure, protochlorophyllide reductase is composed of three subunits; ChlL, ChlN and ChlB. Forms a heterotetramer of two ChlB and two ChlN subunits. [4Fe-4S] cluster serves as cofactor.

The catalysed reaction is chlorophyllide a + oxidized 2[4Fe-4S]-[ferredoxin] + 2 ADP + 2 phosphate = protochlorophyllide a + reduced 2[4Fe-4S]-[ferredoxin] + 2 ATP + 2 H2O. Its pathway is porphyrin-containing compound metabolism; chlorophyll biosynthesis (light-independent). Its function is as follows. Component of the dark-operative protochlorophyllide reductase (DPOR) that uses Mg-ATP and reduced ferredoxin to reduce ring D of protochlorophyllide (Pchlide) to form chlorophyllide a (Chlide). This reaction is light-independent. The NB-protein (ChlN-ChlB) is the catalytic component of the complex. This Synechocystis sp. (strain ATCC 27184 / PCC 6803 / Kazusa) protein is Light-independent protochlorophyllide reductase subunit B.